Consider the following 456-residue polypeptide: MNTVRETIAAIATAQGRGGVGIVRLSGPLAAKAGQLITGRTLTPRHAHYGPFRDQEGLVLDEGIALFFPGPNSFTGEDVLELQGHGGPVVLDMLLQRCVQVGCRLARPGEFSERAFLNDKLDLAQAEAIADLIEASSSQAARNALRSLQGEFSKRVHSLTEALIALRIYVEAAIDFPEEEIDFLADGHVLSMLDSVRAELSTVQREAGQGALLRDGMTVVIAGRPNAGKSSLLNQLAGREAAIVTAIAGTTRDILREHIHIDGMPLHVVDTAGLRDTDDHVEKIGVERALKAIGEADRVLLVVDSTAPEASDPFALWPEFLDQRPDPGKVTLIRNKADLSGEPVGLEQCDDGHVTITLSAKGDDQGLLLLRDHLKACMGYEQTAESGFSARRRHLDALRQACAHLEHGRAQLTLAGAGELLAEDLRQAQHALGEITGAFSSDDLLGRIFSSFCIGK.

The (6S)-5-formyl-5,6,7,8-tetrahydrofolate site is built by Arg-24, Glu-81, and Lys-120. The region spanning 216 to 379 is the TrmE-type G domain; it reads GMTVVIAGRP…LRDHLKACMG (164 aa). Residue Asn-226 coordinates K(+). GTP is bound by residues 226-231, 245-251, 270-273, and 335-338; these read NAGKSS, TAIAGTT, DTAG, and NKAD. Ser-230 is a binding site for Mg(2+). K(+) contacts are provided by Thr-245, Ile-247, and Thr-250. Thr-251 contributes to the Mg(2+) binding site. (6S)-5-formyl-5,6,7,8-tetrahydrofolate is bound at residue Lys-456.

The protein belongs to the TRAFAC class TrmE-Era-EngA-EngB-Septin-like GTPase superfamily. TrmE GTPase family. Homodimer. Heterotetramer of two MnmE and two MnmG subunits. K(+) serves as cofactor.

The protein resides in the cytoplasm. In terms of biological role, exhibits a very high intrinsic GTPase hydrolysis rate. Involved in the addition of a carboxymethylaminomethyl (cmnm) group at the wobble position (U34) of certain tRNAs, forming tRNA-cmnm(5)s(2)U34. This is tRNA modification GTPase MnmE from Pseudomonas putida (strain W619).